The chain runs to 248 residues: UDP-2,3-diacylglucosamine hydrolase (248 aa).

D8, H10, D41, N79, and H114 together coordinate Mn(2+). Substrate is bound at residue 79–80 (NR). Substrate contacts are provided by D122, S160, D171, and H202. Positions 202 and 204 each coordinate Mn(2+).

It belongs to the LpxH family. Requires Mn(2+) as cofactor.

It localises to the cell inner membrane. The catalysed reaction is UDP-2-N,3-O-bis[(3R)-3-hydroxytetradecanoyl]-alpha-D-glucosamine + H2O = 2-N,3-O-bis[(3R)-3-hydroxytetradecanoyl]-alpha-D-glucosaminyl 1-phosphate + UMP + 2 H(+). Its pathway is glycolipid biosynthesis; lipid IV(A) biosynthesis; lipid IV(A) from (3R)-3-hydroxytetradecanoyl-[acyl-carrier-protein] and UDP-N-acetyl-alpha-D-glucosamine: step 4/6. In terms of biological role, hydrolyzes the pyrophosphate bond of UDP-2,3-diacylglucosamine to yield 2,3-diacylglucosamine 1-phosphate (lipid X) and UMP by catalyzing the attack of water at the alpha-P atom. Involved in the biosynthesis of lipid A, a phosphorylated glycolipid that anchors the lipopolysaccharide to the outer membrane of the cell. The chain is UDP-2,3-diacylglucosamine hydrolase from Stenotrophomonas maltophilia (strain R551-3).